The sequence spans 358 residues: Histidinol-phosphate aminotransferase (358 aa).

Lys-218 carries the N6-(pyridoxal phosphate)lysine modification.

Belongs to the class-II pyridoxal-phosphate-dependent aminotransferase family. Histidinol-phosphate aminotransferase subfamily. Homodimer. Pyridoxal 5'-phosphate is required as a cofactor.

The catalysed reaction is L-histidinol phosphate + 2-oxoglutarate = 3-(imidazol-4-yl)-2-oxopropyl phosphate + L-glutamate. Its pathway is amino-acid biosynthesis; L-histidine biosynthesis; L-histidine from 5-phospho-alpha-D-ribose 1-diphosphate: step 7/9. The polypeptide is Histidinol-phosphate aminotransferase (Dehalococcoides mccartyi (strain ATCC BAA-2266 / KCTC 15142 / 195) (Dehalococcoides ethenogenes (strain 195))).